We begin with the raw amino-acid sequence, 444 residues long: Adenylosuccinate synthetase (444 aa).

Residues 12-18 (GDEGKGK) and 40-42 (GHT) contribute to the GTP site. Residue D13 is the Proton acceptor of the active site. Positions 13 and 40 each coordinate Mg(2+). IMP contacts are provided by residues 13-16 (DEGK), 38-41 (NAGH), T128, R142, Q223, T238, and R302. Catalysis depends on H41, which acts as the Proton donor. 298–304 (TTTGRRR) is a substrate binding site. Residues R304, 330 to 332 (KLD), and 412 to 414 (SLG) contribute to the GTP site.

The protein belongs to the adenylosuccinate synthetase family. Homodimer. It depends on Mg(2+) as a cofactor.

The protein localises to the cytoplasm. It catalyses the reaction IMP + L-aspartate + GTP = N(6)-(1,2-dicarboxyethyl)-AMP + GDP + phosphate + 2 H(+). It functions in the pathway purine metabolism; AMP biosynthesis via de novo pathway; AMP from IMP: step 1/2. Functionally, plays an important role in the de novo pathway of purine nucleotide biosynthesis. Catalyzes the first committed step in the biosynthesis of AMP from IMP. This is Adenylosuccinate synthetase from Synechococcus elongatus (strain ATCC 33912 / PCC 7942 / FACHB-805) (Anacystis nidulans R2).